A 663-amino-acid chain; its full sequence is Beta-galactosidase YesZ (663 aa).

R106 lines the substrate pocket. C110 is a binding site for Zn(2+). N144 contacts substrate. The active-site Proton donor is the E145. Zn(2+) is bound by residues C153, C155, and C158. E296 (nucleophile) is an active-site residue. Position 345–348 (345–348 (EISH)) interacts with substrate.

Belongs to the glycosyl hydrolase 42 family. As to quaternary structure, homotrimer.

The enzyme catalyses Hydrolysis of terminal non-reducing beta-D-galactose residues in beta-D-galactosides.. In terms of biological role, may play a role in the degradation of rhamnogalacturonan derived from plant cell walls. The polypeptide is Beta-galactosidase YesZ (yesZ) (Bacillus subtilis (strain 168)).